The sequence spans 214 residues: Adenylate kinase (214 aa).

10–15 is a binding site for ATP; that stretch reads GAGKGT. The interval 30-59 is NMP; that stretch reads STGDMLRAAIKAGTELGLEAKRVMDEGKLV. Residues threonine 31, arginine 36, 57-59, 85-88, and glutamine 92 each bind AMP; these read KLV and GFPR. The interval 122-159 is LID; sequence GRRVHPASGRVYHVVYNPPKVEGKDNETGDDLIVRDDD. Residues arginine 123 and 132–133 each bind ATP; that span reads VY. Arginine 156 and arginine 167 together coordinate AMP. Residue arginine 200 coordinates ATP.

The protein belongs to the adenylate kinase family. Monomer.

The protein resides in the cytoplasm. It carries out the reaction AMP + ATP = 2 ADP. It functions in the pathway purine metabolism; AMP biosynthesis via salvage pathway; AMP from ADP: step 1/1. Its function is as follows. Catalyzes the reversible transfer of the terminal phosphate group between ATP and AMP. Plays an important role in cellular energy homeostasis and in adenine nucleotide metabolism. In Alteromonas mediterranea (strain DSM 17117 / CIP 110805 / LMG 28347 / Deep ecotype), this protein is Adenylate kinase.